An 89-amino-acid chain; its full sequence is Small ribosomal subunit protein uS15 (89 aa).

Residues 1–21 (MALSPEKKNEIIENFKTHEGD) show a composition bias toward basic and acidic residues. Residues 1–23 (MALSPEKKNEIIENFKTHEGDTG) are disordered.

Belongs to the universal ribosomal protein uS15 family. Part of the 30S ribosomal subunit. Forms a bridge to the 50S subunit in the 70S ribosome, contacting the 23S rRNA.

One of the primary rRNA binding proteins, it binds directly to 16S rRNA where it helps nucleate assembly of the platform of the 30S subunit by binding and bridging several RNA helices of the 16S rRNA. Functionally, forms an intersubunit bridge (bridge B4) with the 23S rRNA of the 50S subunit in the ribosome. The polypeptide is Small ribosomal subunit protein uS15 (Desulforamulus reducens (strain ATCC BAA-1160 / DSM 100696 / MI-1) (Desulfotomaculum reducens)).